The following is a 174-amino-acid chain: Trypsin inhibitor (174 aa).

Cystine bridges form between Cys40–Cys86 and Cys131–Cys140.

Belongs to the protease inhibitor I3 (leguminous Kunitz-type inhibitor) family. In terms of assembly, heterodimer of an alpha and a beta chain linked by a disulfide bond.

In terms of biological role, inhibits trypsin and chymotrypsin with a 1:1 stoichiometry, with dissociation constants of 1.56 nM and 120 nM respectively. Inhibits plasma kallikrein, factor XIIa and plasmin with dissociation constants of 5.0 nM, 150 nM and 18 nM respectively. Does not inhibit factor Xa, thrombin, tissue kallikrein or cysteine proteinases such as papain and bromelain. In Enterolobium contortisiliquum (Pacara earpod tree), this protein is Trypsin inhibitor.